The chain runs to 131 residues: Large ribosomal subunit protein bL17 (131 aa).

This sequence belongs to the bacterial ribosomal protein bL17 family. As to quaternary structure, part of the 50S ribosomal subunit. Contacts protein L32.

The polypeptide is Large ribosomal subunit protein bL17 (Bordetella parapertussis (strain 12822 / ATCC BAA-587 / NCTC 13253)).